The primary structure comprises 630 residues: WD repeat-containing protein 26 homolog (630 aa).

Positions 1–13 are enriched in low complexity; it reads MQSTSSTSSGSCS. The disordered stretch occupies residues 1–90; that stretch reads MQSTSSTSSG…NNRENTSCSG (90 aa). A phosphoserine mark is found at serine 36 and serine 40. 2 stretches are compositionally biased toward polar residues: residues 48–57 and 66–75; these read PSGSSAATNG and IVNNNGSSSR. The LisH domain maps to 96–128; the sequence is SNQEIIRLIGQYLHDVGLDKSVQTLMLESGCYL. A CTLH domain is found at 129–190; the sequence is EHPSATKFRE…EHLDDGNPLD (62 aa). 7 WD repeats span residues 312 to 351, 359 to 400, 404 to 443, 445 to 482, 485 to 524, 529 to 569, and 572 to 612; these read DHCD…LTLK, QAQL…LVVK, SLED…VDSW, GVRV…SDFD, REPH…LVRR, RQSN…PLAK, and GHTK…SSAT. Positions 604 to 630 are disordered; that stretch reads PKPNGSSATTESDDCSSSSSSSSWNMT. Low complexity predominate over residues 609–630; it reads SSATTESDDCSSSSSSSSWNMT.

It localises to the cytoplasm. Its subcellular location is the mitochondrion. In terms of biological role, G-beta-like protein involved in cell signal transduction. This chain is WD repeat-containing protein 26 homolog, found in Drosophila melanogaster (Fruit fly).